The primary structure comprises 486 residues: Probable cytosol aminopeptidase (486 aa).

This sequence belongs to the peptidase M17 family. Mn(2+) is required as a cofactor.

Its subcellular location is the cytoplasm. It carries out the reaction Release of an N-terminal amino acid, Xaa-|-Yaa-, in which Xaa is preferably Leu, but may be other amino acids including Pro although not Arg or Lys, and Yaa may be Pro. Amino acid amides and methyl esters are also readily hydrolyzed, but rates on arylamides are exceedingly low.. The catalysed reaction is Release of an N-terminal amino acid, preferentially leucine, but not glutamic or aspartic acids.. Its function is as follows. Presumably involved in the processing and regular turnover of intracellular proteins. Catalyzes the removal of unsubstituted N-terminal amino acids from various peptides. The polypeptide is Probable cytosol aminopeptidase (pepA) (Synechococcus elongatus (strain ATCC 33912 / PCC 7942 / FACHB-805) (Anacystis nidulans R2)).